A 365-amino-acid chain; its full sequence is Large ribosomal subunit protein uL3 (365 aa).

Residues 343 to 365 (RPPKKKPPVQRPQITYVSVESKQ) form a disordered region. Over residues 354–365 (PQITYVSVESKQ) the composition is skewed to polar residues.

Belongs to the universal ribosomal protein uL3 family. Part of the 50S ribosomal subunit. Forms a cluster with proteins L14 and L24e.

Its function is as follows. One of the primary rRNA binding proteins, it binds directly near the 3'-end of the 23S rRNA, where it nucleates assembly of the 50S subunit. The polypeptide is Large ribosomal subunit protein uL3 (Pyrococcus furiosus (strain ATCC 43587 / DSM 3638 / JCM 8422 / Vc1)).